Consider the following 319-residue polypeptide: Biotin synthase (319 aa).

The region spanning 41–267 is the Radical SAM core domain; the sequence is YKGNKVKVCS…TPDIMICGGR (227 aa). Residues C59, C63, and C66 each contribute to the [4Fe-4S] cluster site. [2Fe-2S] cluster is bound at residue C192.

The protein belongs to the radical SAM superfamily. Biotin synthase family. Homodimer. It depends on [4Fe-4S] cluster as a cofactor. [2Fe-2S] cluster is required as a cofactor.

The enzyme catalyses (4R,5S)-dethiobiotin + (sulfur carrier)-SH + 2 reduced [2Fe-2S]-[ferredoxin] + 2 S-adenosyl-L-methionine = (sulfur carrier)-H + biotin + 2 5'-deoxyadenosine + 2 L-methionine + 2 oxidized [2Fe-2S]-[ferredoxin]. It functions in the pathway cofactor biosynthesis; biotin biosynthesis; biotin from 7,8-diaminononanoate: step 2/2. In terms of biological role, catalyzes the conversion of dethiobiotin (DTB) to biotin by the insertion of a sulfur atom into dethiobiotin via a radical-based mechanism. This chain is Biotin synthase, found in Endomicrobium trichonymphae.